A 330-amino-acid polypeptide reads, in one-letter code: tRNA U34 carboxymethyltransferase (330 aa).

Residues lysine 91, tryptophan 105, lysine 110, glycine 130, 152-154, 181-182, methionine 196, tyrosine 200, and arginine 315 contribute to the carboxy-S-adenosyl-L-methionine site; these read DPS and IE.

The protein belongs to the class I-like SAM-binding methyltransferase superfamily. CmoB family. As to quaternary structure, homotetramer.

The enzyme catalyses carboxy-S-adenosyl-L-methionine + 5-hydroxyuridine(34) in tRNA = 5-carboxymethoxyuridine(34) in tRNA + S-adenosyl-L-homocysteine + H(+). Functionally, catalyzes carboxymethyl transfer from carboxy-S-adenosyl-L-methionine (Cx-SAM) to 5-hydroxyuridine (ho5U) to form 5-carboxymethoxyuridine (cmo5U) at position 34 in tRNAs. This chain is tRNA U34 carboxymethyltransferase, found in Shewanella pealeana (strain ATCC 700345 / ANG-SQ1).